We begin with the raw amino-acid sequence, 239 residues long: Cysteine-rich venom protein kaouthin-1 (239 aa).

Residues M1–G18 form the signal peptide. Residues V37 to Y165 enclose the SCP domain. 8 cysteine pairs are disulfide-bonded: C74-C152, C91-C166, C147-C163, C185-C192, C188-C197, C201-C234, C210-C228, and C219-C232. The region spanning C201 to C234 is the ShKT domain.

It belongs to the CRISP family. In terms of tissue distribution, expressed by the venom gland.

It localises to the secreted. Functionally, inhibits calcium-activated potassium channels (KCa), voltage-gated potassium channel (Kv), and the calcium release channel/ryanodine receptor (RyR). This chain is Cysteine-rich venom protein kaouthin-1, found in Naja kaouthia (Monocled cobra).